The following is a 137-amino-acid chain: MLVPKRVKHRREFRGKMRGEAKGGKEVAFGEYGLQATTSHWITNRQIEAARIAMTRYMKRGGKVWIKIFPHKSYTAKAIGVRMGSGKGAPEGWVAPVKRGKIMFEIADVPEEVAREALRLASHKLPVKTKFVKREAE.

It belongs to the universal ribosomal protein uL16 family. Part of the 50S ribosomal subunit.

Its function is as follows. Binds 23S rRNA and is also seen to make contacts with the A and possibly P site tRNAs. In Streptococcus mutans serotype c (strain ATCC 700610 / UA159), this protein is Large ribosomal subunit protein uL16.